A 346-amino-acid chain; its full sequence is Phosphate acyltransferase (346 aa).

Belongs to the PlsX family. In terms of assembly, homodimer. Probably interacts with PlsY.

It localises to the cytoplasm. It catalyses the reaction a fatty acyl-[ACP] + phosphate = an acyl phosphate + holo-[ACP]. It participates in lipid metabolism; phospholipid metabolism. Its function is as follows. Catalyzes the reversible formation of acyl-phosphate (acyl-PO(4)) from acyl-[acyl-carrier-protein] (acyl-ACP). This enzyme utilizes acyl-ACP as fatty acyl donor, but not acyl-CoA. This chain is Phosphate acyltransferase, found in Psychromonas ingrahamii (strain DSM 17664 / CCUG 51855 / 37).